A 456-amino-acid polypeptide reads, in one-letter code: 26S proteasome non-ATPase regulatory subunit 12 (456 aa).

Position 2 is an N-acetylalanine (Ala2). Lys92 is covalently cross-linked (Glycyl lysine isopeptide (Lys-Gly) (interchain with G-Cter in SUMO1); alternate). A Glycyl lysine isopeptide (Lys-Gly) (interchain with G-Cter in SUMO2); alternate cross-link involves residue Lys92. An N6-acetyllysine mark is found at Lys221 and Lys368. The PCI domain maps to 242 to 420 (SICKHYRAIY…GIINFQRPKD (179 aa)).

The protein belongs to the proteasome subunit p55 family. In terms of assembly, component of the 19S proteasome regulatory particle complex. The 26S proteasome consists of a 20S core particle (CP) and two 19S regulatory subunits (RP). The regulatory particle is made of a lid composed of 9 subunits including PSMD12, a base containing 6 ATPases and few additional components. Interacts with ERCC6.

Its function is as follows. Component of the 26S proteasome, a multiprotein complex involved in the ATP-dependent degradation of ubiquitinated proteins. This complex plays a key role in the maintenance of protein homeostasis by removing misfolded or damaged proteins, which could impair cellular functions, and by removing proteins whose functions are no longer required. Therefore, the proteasome participates in numerous cellular processes, including cell cycle progression, apoptosis, or DNA damage repair. This Bos taurus (Bovine) protein is 26S proteasome non-ATPase regulatory subunit 12 (PSMD12).